We begin with the raw amino-acid sequence, 79 residues long: U-actitoxin-Oulsp1 (79 aa).

The signal sequence occupies residues 1–21 (MNTKLVVVFLLSAILFVSVTA). A propeptide spanning residues 22 to 43 (SRPGKDLERDEAYETYDDENKR) is cleaved from the precursor. The ShKT domain maps to 45–79 (CKDVFPAATCRHAKSVGNCSSEKYKRNCAITCGAC). 3 cysteine pairs are disulfide-bonded: Cys45–Cys79, Cys54–Cys72, and Cys63–Cys76. The tract at residues 67 to 68 (KY) is crucial for binding to potassium channels.

It belongs to the sea anemone type 1 potassium channel toxin family. Type 1b subfamily. Post-translationally, two similar peptides (OspTx2a-p1 and -p2) are obtained after synthesis and oxidative folding. They may differ by a D-Cys at position 76 (corresponding to OspTx2a-p2). Since C-terminal Cys residues are prone to racemization during solid-phase peptide synthesis, and if the presence of a D-amino acid is correct, it is probable that OspTx2a-p1 (L-Cys-76 form) corresponds to the native peptide.

The protein localises to the secreted. Toxin that weakly blocks the two voltage-gated potassium channels on Kv1.2/KCNA2 (IC(50)=1.8-2.5 uM) and Kv1.6/KCNA6 (IC(50)=5.6-6.2 uM). This Oulactis sp. (Sea anemone) protein is U-actitoxin-Oulsp1.